A 388-amino-acid chain; its full sequence is Pregnancy-associated glycoprotein (388 aa).

An N-terminal signal peptide occupies residues 1–15 (MKWFGVLGLVTLSEC). Residues 74-385 (YMGIISVGTP…DRENDRIGLA (312 aa)) enclose the Peptidase A1 domain. Asp-92 is a catalytic residue. 2 cysteine pairs are disulfide-bonded: Cys-105-Cys-110 and Cys-266-Cys-270. The active site involves Asp-275. Cys-309 and Cys-344 form a disulfide bridge. An N-linked (GlcNAc...) asparagine glycan is attached at Asn-356.

This sequence belongs to the peptidase A1 family. In terms of tissue distribution, trophoblast and placental tissue.

It localises to the secreted. It is found in the extracellular space. This is Pregnancy-associated glycoprotein (PAG) from Equus caballus (Horse).